The primary structure comprises 115 residues: NADH-ubiquinone oxidoreductase chain 3 (115 aa).

Transmembrane regions (helical) follow at residues 3-23 (FALILMTNTLLALLLMIITFW), 55-75 (FFLVAITFLLFDLEIALLLPL), and 84-104 (LPLMVMSSLLLIIILTLSLAY).

It belongs to the complex I subunit 3 family. As to quaternary structure, core subunit of respiratory chain NADH dehydrogenase (Complex I) which is composed of 45 different subunits. Interacts with TMEM186. Interacts with TMEM242.

It localises to the mitochondrion inner membrane. It catalyses the reaction a ubiquinone + NADH + 5 H(+)(in) = a ubiquinol + NAD(+) + 4 H(+)(out). Core subunit of the mitochondrial membrane respiratory chain NADH dehydrogenase (Complex I) which catalyzes electron transfer from NADH through the respiratory chain, using ubiquinone as an electron acceptor. Essential for the catalytic activity of complex I. The chain is NADH-ubiquinone oxidoreductase chain 3 from Gorilla gorilla gorilla (Western lowland gorilla).